The chain runs to 113 residues: UPF0212 protein MmarC6_1165 (113 aa).

It belongs to the UPF0212 family.

The protein is UPF0212 protein MmarC6_1165 of Methanococcus maripaludis (strain C6 / ATCC BAA-1332).